The chain runs to 159 residues: MTDQQNTEAAEAQGPQFSLQRIYVRDLSFEAPKSPAIFRQEWTPSVALDLNTRQKALEGDFHEVVLTLSVTVKNGEEVAFIAEVQQAGIFLIQGLDEASMSHTLGAFCPNILFPYARETLDSLVTRGSFPALMLAPVNFDALYAQELQRMQQEGSSTVQ.

The protein belongs to the SecB family. In terms of assembly, homotetramer, a dimer of dimers. One homotetramer interacts with 1 SecA dimer.

Its subcellular location is the cytoplasm. Functionally, one of the proteins required for the normal export of preproteins out of the cell cytoplasm. It is a molecular chaperone that binds to a subset of precursor proteins, maintaining them in a translocation-competent state. It also specifically binds to its receptor SecA. The protein is Protein-export protein SecB of Pseudomonas fluorescens (strain SBW25).